A 1162-amino-acid chain; its full sequence is Spike glycoprotein (1162 aa).

The signal sequence occupies residues 1–18 (MLVTPLLLVTLLCALCSA). The Extracellular segment spans residues 19 to 1095 (VLYDSSSYVY…LKTYIKWPWY (1077 aa)). Asn-51, Asn-77, Asn-103, Asn-144, Asn-163, Asn-178, Asn-212, Asn-237, Asn-247, Asn-264, Asn-276, Asn-306, Asn-425, Asn-447, Asn-513, Asn-530, Asn-579, Asn-591, Asn-669, Asn-676, and Asn-714 each carry an N-linked (GlcNAc...) asparagine; by host glycan. Residues 769–874 (IPFATQLQAR…QVDRLITGRL (106 aa)) are heptad repeat 1 (HR1). Residues 822–866 (QDVVSKQSAILTETMASLNKNFGAISSVIQEIYQQFDAIQANAQV) adopt a coiled-coil conformation. N-linked (GlcNAc...) asparagine; by host glycosylation is found at Asn-947, Asn-960, Asn-979, Asn-1014, Asn-1038, Asn-1051, and Asn-1074. Positions 1024 to 1105 (NDDFDFNDEL…VWLAIAFATI (82 aa)) are heptad repeat 2 (HR2). Residues 1055-1083 (PILDIDSEIDRIQGVIQGLNDSLIDLEKL) adopt a coiled-coil conformation. A helical transmembrane segment spans residues 1096 to 1116 (VWLAIAFATIIFILILGWVFF). Topologically, residues 1117–1162 (MTGCCGCCCGCFGIMPLMSKCGKKSSYYTTFDNDVVTEQYRPKKSV) are cytoplasmic. The Di-lysine motif signature appears at 1159–1162 (KKSV).

The protein belongs to the gammacoronaviruses spike protein family. Homotrimer; each monomer consists of a S1 and a S2 subunit. The resulting peplomers protrude from the virus surface as spikes. In terms of processing, specific enzymatic cleavages in vivo yield mature proteins. The precursor is processed into S1 and S2 by host cell furin or furin-like protease to yield the mature S1 and S2 proteins. The cleavage site between S1 and S2 requires the optimal sequence [KR]-X-[KR]-R. Additionally, a second cleavage leads to the release of a fusion peptide after viral attachment to host cell receptor.

It is found in the virion membrane. It localises to the host endoplasmic reticulum-Golgi intermediate compartment membrane. Attaches the virion to the host cell membrane by interacting with sialic acids, initiating the infection. Its function is as follows. Mediates fusion of the virion and cellular membranes by acting as a class I viral fusion protein. Under the current model, the protein has at least 3 conformational states: pre-fusion native state, pre-hairpin intermediate state, and post-fusion hairpin state. During viral and target cell membrane fusion, the coiled coil regions (heptad repeats) assume a trimer-of-hairpins structure, positioning the fusion peptide in close proximity to the C-terminal region of the ectodomain. The formation of this structure appears to drive apposition and subsequent fusion of viral and target cell membranes. Functionally, acts as a viral fusion peptide after S2 cleavage occurring upon virus endocytosis. The polypeptide is Spike glycoprotein (Avian infectious bronchitis virus (strain Beaudette) (IBV)).